We begin with the raw amino-acid sequence, 236 residues long: Small ribosomal subunit protein uS2c (236 aa).

It belongs to the universal ribosomal protein uS2 family.

It is found in the plastid. The protein localises to the chloroplast. This Guizotia abyssinica (Niger) protein is Small ribosomal subunit protein uS2c (rps2).